The primary structure comprises 62 residues: Short neurotoxin 2 (62 aa).

A disordered region spans residues 1 to 20; the sequence is MTCYNQQSSEAKTTTTCSGG. Cystine bridges form between Cys-3-Cys-24, Cys-17-Cys-41, Cys-43-Cys-54, and Cys-55-Cys-60.

Belongs to the three-finger toxin family. Short-chain subfamily. Type I alpha-neurotoxin sub-subfamily. As to expression, expressed by the venom gland.

It is found in the secreted. In terms of biological role, binds to muscle nicotinic acetylcholine receptor (nAChR) and inhibit acetylcholine from binding to the receptor, thereby impairing neuromuscular transmission. This is Short neurotoxin 2 from Oxyuranus scutellatus scutellatus (Australian taipan).